A 271-amino-acid polypeptide reads, in one-letter code: MADEVVGQEYQGNPGAFSPQQARQIFRAGTVAHTSGYSRGYAQANLITLPQEQAFDFLLFAQRNPKPCPLLGVLEAGQVSSELLADGDIRSDIPLYRVYRKGQLDSEVPDVRDVWREDLVSFIIGCSFTFETALLDNGVPVEHIAQGKNVPMYRTSIPTNSAGAFSGPMVVSMRPIPAAQVADAVRITSRYPAVHGAPVHVGDPAAIGIQDLNNPDFGEAVDIPAGTIPVFWACGVTPQSVVMESKPEFAICHAPGHMLITDARDLQYQVP.

This sequence belongs to the D-glutamate cyclase family.

The protein is Putative hydro-lyase jk0403 of Corynebacterium jeikeium (strain K411).